We begin with the raw amino-acid sequence, 104 residues long: MSKKIKLNDEIIVRVGKYKGKTGKIKKIFSDGKAIIEGINISKKHKKPTPNEKQSGGIFEKEQPISLSNVAIFNIDTNKPDKVKFKIEKGKKYRIFKSNGKKIK.

Positions 41-61 are disordered; it reads ISKKHKKPTPNEKQSGGIFEK.

The protein belongs to the universal ribosomal protein uL24 family. Part of the 50S ribosomal subunit.

One of two assembly initiator proteins, it binds directly to the 5'-end of the 23S rRNA, where it nucleates assembly of the 50S subunit. In terms of biological role, one of the proteins that surrounds the polypeptide exit tunnel on the outside of the subunit. This is Large ribosomal subunit protein uL24 from Wigglesworthia glossinidia brevipalpis.